Here is a 70-residue protein sequence, read N- to C-terminus: Mu-agatoxin-Ao1b (70 aa).

A signal peptide spans Met-1–Ala-20. A propeptide spanning residues Ser-21–Arg-33 is cleaved from the precursor. 4 disulfide bridges follow: Cys-35-Cys-50, Cys-42-Cys-55, Cys-49-Cys-65, and Cys-57-Cys-63. At Asn-69 the chain carries Asparagine amide.

This sequence belongs to the neurotoxin 07 (Beta/delta-agtx) family. 04 (aga-5) subfamily. Expressed by the venom gland.

It is found in the secreted. Insecticidal neurotoxin that modulates the insect Nav channel (DmNaV1/tipE (para/tipE)) in a unique manner, with both the activation and inactivation processes being affected. The voltage dependence of activation is shifted toward more hyperpolarized potentials (analogous to site 4 toxins) and a non-inactivating persistent sodium current is induced (site 3-like action). Interestingly, both effects take place in a voltage-dependent manner, producing a bell-shaped curve between -80 and 0 mV. The sequence is that of Mu-agatoxin-Ao1b from Agelena orientalis (Funnel-web spider).